The following is a 385-amino-acid chain: Succinate--CoA ligase [ADP-forming] subunit beta (385 aa).

Positions 9-243 constitute an ATP-grasp domain; that stretch reads KEILSAYGIP…YSQLDTLEIN (235 aa). ATP contacts are provided by residues Lys-45, 52–54, Glu-98, Val-101, and Glu-106; that span reads GRG. Mg(2+) is bound by residues Asn-198 and Asp-212. Substrate is bound by residues Asn-263 and 320–322; that span reads GIM.

The protein belongs to the succinate/malate CoA ligase beta subunit family. In terms of assembly, heterotetramer of two alpha and two beta subunits. It depends on Mg(2+) as a cofactor.

It carries out the reaction succinate + ATP + CoA = succinyl-CoA + ADP + phosphate. It catalyses the reaction GTP + succinate + CoA = succinyl-CoA + GDP + phosphate. The protein operates within carbohydrate metabolism; tricarboxylic acid cycle; succinate from succinyl-CoA (ligase route): step 1/1. Succinyl-CoA synthetase functions in the citric acid cycle (TCA), coupling the hydrolysis of succinyl-CoA to the synthesis of either ATP or GTP and thus represents the only step of substrate-level phosphorylation in the TCA. The beta subunit provides nucleotide specificity of the enzyme and binds the substrate succinate, while the binding sites for coenzyme A and phosphate are found in the alpha subunit. The protein is Succinate--CoA ligase [ADP-forming] subunit beta of Geobacter sulfurreducens (strain ATCC 51573 / DSM 12127 / PCA).